The chain runs to 440 residues: Xylose isomerase (440 aa).

Active-site residues include histidine 100 and aspartate 103. 7 residues coordinate Mg(2+): glutamate 231, glutamate 267, histidine 270, aspartate 295, aspartate 306, aspartate 308, and aspartate 338.

It belongs to the xylose isomerase family. Homotetramer. It depends on Mg(2+) as a cofactor.

It localises to the cytoplasm. It catalyses the reaction alpha-D-xylose = alpha-D-xylulofuranose. This Paraburkholderia phytofirmans (strain DSM 17436 / LMG 22146 / PsJN) (Burkholderia phytofirmans) protein is Xylose isomerase.